The chain runs to 178 residues: ATP-dependent protease subunit HslV (178 aa).

The active site involves T7. Residues G162, C165, and T168 each coordinate Na(+).

Belongs to the peptidase T1B family. HslV subfamily. In terms of assembly, a double ring-shaped homohexamer of HslV is capped on each side by a ring-shaped HslU homohexamer. The assembly of the HslU/HslV complex is dependent on binding of ATP.

It localises to the cytoplasm. It catalyses the reaction ATP-dependent cleavage of peptide bonds with broad specificity.. With respect to regulation, allosterically activated by HslU binding. Protease subunit of a proteasome-like degradation complex believed to be a general protein degrading machinery. The protein is ATP-dependent protease subunit HslV of Burkholderia ambifaria (strain ATCC BAA-244 / DSM 16087 / CCUG 44356 / LMG 19182 / AMMD) (Burkholderia cepacia (strain AMMD)).